A 31-amino-acid chain; its full sequence is Cyclotide Hyfl-A (31 aa).

The cyclopeptide (Ser-Asn) cross-link spans 1-31 (SISCGESCVYIPCTVTALVGCTCKDKVCYLN). Disulfide bonds link C4–C21, C8–C23, and C13–C28.

The protein belongs to the cyclotide family. Bracelet subfamily. This is a cyclic peptide.

Functionally, probably participates in a plant defense mechanism. The sequence is that of Cyclotide Hyfl-A from Hybanthus floribundus (Greenviolet).